Consider the following 113-residue polypeptide: Protein ZEO1 (113 aa).

Over residues M1–Q16 the composition is skewed to polar residues. The disordered stretch occupies residues M1–K96. S2 carries the N-acetylserine modification. Phosphoserine is present on S2. A coiled-coil region spans residues S2 to E97. Positions Q17–A37 are enriched in basic and acidic residues. Residues K18 and K23 each participate in a glycyl lysine isopeptide (Lys-Gly) (interchain with G-Cter in ubiquitin) cross-link. The residue at position 25 (S25) is a Phosphoserine. Residues K29 and K34 each participate in a glycyl lysine isopeptide (Lys-Gly) (interchain with G-Cter in ubiquitin) cross-link. At S40 the chain carries Phosphoserine. Residue K45 forms a Glycyl lysine isopeptide (Lys-Gly) (interchain with G-Cter in ubiquitin) linkage. T49 is modified (phosphothreonine). Residues E53 to K82 show a composition bias toward basic and acidic residues. Residues K57 and K82 each participate in a glycyl lysine isopeptide (Lys-Gly) (interchain with G-Cter in ubiquitin) cross-link.

As to quaternary structure, interacts with MID2. Post-translationally, phosphorylation of Ser-25 is induced 2-fold in response to mating pheromone.

The protein localises to the cell membrane. Acts antagonistically to MID2 in signaling cell wall stress to the PKC1-MPK1 cell integrity pathway. The polypeptide is Protein ZEO1 (ZEO1) (Saccharomyces cerevisiae (strain ATCC 204508 / S288c) (Baker's yeast)).